The sequence spans 315 residues: DNA-directed RNA polymerase subunit alpha (315 aa).

Positions 1-228 (MLEIEKPKIE…EHLRLFVGLT (228 aa)) are alpha N-terminal domain (alpha-NTD). Residues 245–315 (KNKLLEMPIE…LGLDLRHDEE (71 aa)) are alpha C-terminal domain (alpha-CTD).

The protein belongs to the RNA polymerase alpha chain family. Homodimer. The RNAP catalytic core consists of 2 alpha, 1 beta, 1 beta' and 1 omega subunit. When a sigma factor is associated with the core the holoenzyme is formed, which can initiate transcription.

The enzyme catalyses RNA(n) + a ribonucleoside 5'-triphosphate = RNA(n+1) + diphosphate. In terms of biological role, DNA-dependent RNA polymerase catalyzes the transcription of DNA into RNA using the four ribonucleoside triphosphates as substrates. The sequence is that of DNA-directed RNA polymerase subunit alpha from Desulforudis audaxviator (strain MP104C).